The primary structure comprises 926 residues: OTU domain-containing protein 7A (926 aa).

Residues proline 75 to arginine 99 form a disordered region. Positions arginine 82–arginine 99 are enriched in basic and acidic residues. Position 119 is a phosphoserine (serine 119). The segment at glutamate 168 to tryptophan 410 is TRAF-binding. Residues alanine 183 to threonine 449 are catalytic. An OTU domain is found at leucine 199 to methionine 374. The active site involves aspartate 207. The Nucleophile role is filled by cysteine 210. Residue histidine 367 is the Proton acceptor of the active site. 3 disordered regions span residues proline 452–alanine 514, glycine 537–lysine 613, and glutamate 668–arginine 768. The span at valine 481 to lysine 491 shows a compositional bias: low complexity. A compositionally biased stretch (basic and acidic residues) spans asparagine 492–alanine 510. Positions lysine 494–arginine 509 match the Nuclear localization signal motif. 3 stretches are compositionally biased toward low complexity: residues glycine 576–threonine 592, alanine 677–alanine 691, and proline 729–threonine 742. Omega-N-methylarginine is present on arginine 880. An A20-type zinc finger spans residues glycine 884 to arginine 919. Zn(2+)-binding residues include cysteine 890, cysteine 895, cysteine 907, and cysteine 910.

The protein belongs to the peptidase C64 family.

It is found in the cytoplasm. It localises to the nucleus. It carries out the reaction Thiol-dependent hydrolysis of ester, thioester, amide, peptide and isopeptide bonds formed by the C-terminal Gly of ubiquitin (a 76-residue protein attached to proteins as an intracellular targeting signal).. Deubiquitinase, which cleaves 'Lys-11'-linked polyubiquitin chains. Might be required for PA28-20S proteasome assembly. This chain is OTU domain-containing protein 7A (OTUD7A), found in Homo sapiens (Human).